Consider the following 447-residue polypeptide: Selenide, water dikinase 3 (447 aa).

Sec50 is an active-site residue. Position 50 (Sec50) is a non-standard amino acid, selenocysteine. ATP contacts are provided by residues Lys53, 103-105 (GMD), Asp123, Asp146, and 197-200 (GGQT). A Mg(2+)-binding site is contributed by Asp105. Asp146 is a Mg(2+) binding site. A Mg(2+)-binding site is contributed by Asp301.

This sequence belongs to the selenophosphate synthase 1 family. In terms of assembly, homodimer. Mg(2+) is required as a cofactor. As to expression, in the embryo, expressed in retina, olfactory vesicles, tectum, pronephros ducts and myotomes at 24 hours post-fertilization and in retina, tectum, liver and intestinal bulb 3 days after fertilization.

It catalyses the reaction hydrogenselenide + ATP + H2O = selenophosphate + AMP + phosphate + 2 H(+). Its function is as follows. Synthesizes selenophosphate from selenide and ATP. This Danio rerio (Zebrafish) protein is Selenide, water dikinase 3.